Reading from the N-terminus, the 432-residue chain is Adenylosuccinate synthetase (432 aa).

GTP contacts are provided by residues 11–17 and 39–41; these read GDEGKGK and GHT. D12 serves as the catalytic Proton acceptor. The Mg(2+) site is built by D12 and G39. Residues 12–15, 37–40, T134, R148, N230, T245, and R309 contribute to the IMP site; these read DEGK and NAGH. H40 (proton donor) is an active-site residue. 305-311 is a substrate binding site; the sequence is VTTGRKR. GTP is bound by residues R311, 337 to 339, and 419 to 421; these read KLD and GTG.

Belongs to the adenylosuccinate synthetase family. In terms of assembly, homodimer. Requires Mg(2+) as cofactor.

The protein localises to the cytoplasm. It carries out the reaction IMP + L-aspartate + GTP = N(6)-(1,2-dicarboxyethyl)-AMP + GDP + phosphate + 2 H(+). It functions in the pathway purine metabolism; AMP biosynthesis via de novo pathway; AMP from IMP: step 1/2. In terms of biological role, plays an important role in the de novo pathway and in the salvage pathway of purine nucleotide biosynthesis. Catalyzes the first committed step in the biosynthesis of AMP from IMP. The protein is Adenylosuccinate synthetase of Kluyveromyces lactis (strain ATCC 8585 / CBS 2359 / DSM 70799 / NBRC 1267 / NRRL Y-1140 / WM37) (Yeast).